Here is a 378-residue protein sequence, read N- to C-terminus: MFSNSKKKIFLYVLIAGVATFSFAFLVLNRLQAEEHSLAYVENLFLDPFIKQNESLAHANDRPFKLYLGIFSQAKNVDRRNFLRTDYNEYIKEFAVNDTVDVRFILGLPENEQELATIREEQRTYGDLAVLPIPENVDAGKSIVYFQTFLEGYQPFPLFSELADNLIMPSTQFHGSFIYNQSIKTYELPGMKEFQDLGEPKHDYDFIVKADDDSFLNLPRLFEMLKEHVGKSRFYFGRDCTRRELPTAVRDFPYMCGFFYIVSPDMAYEVAKRRNIIIPFEDAQTGYSIYLSGNVKNAEFSKCTLYDLILPNEGFNYRQSYLRIDAIAVHKLKSIPLLSTVSNWFKKMYEHRANCSALIETERLSCLQATIPLPSLDV.

At 1–8 (MFSNSKKK) the chain is on the cytoplasmic side. Residues 9-29 (IFLYVLIAGVATFSFAFLVLN) traverse the membrane as a helical; Signal-anchor for type II membrane protein segment. Topologically, residues 30 to 378 (RLQAEEHSLA…ATIPLPSLDV (349 aa)) are lumenal. Residues Asn-53, Asn-97, Asn-180, and Asn-354 are each glycosylated (N-linked (GlcNAc...) asparagine).

This sequence belongs to the glycosyltransferase 31 family.

It localises to the endoplasmic reticulum membrane. The protein localises to the golgi apparatus. Its subcellular location is the golgi stack membrane. It carries out the reaction 3-O-(beta-D-galactosyl-(1-&gt;4)-beta-D-xylosyl)-L-seryl-[protein] + UDP-alpha-D-galactose = 3-O-(beta-D-galactosyl-(1-&gt;3)-beta-D-galactosyl-(1-&gt;4)-beta-D-xylosyl)-L-seryl-[protein] + UDP + H(+). Its function is as follows. Involved in cell wall biogenesis. Has a role in the addition of Gal-beta1,3 moeities to galactomannans and their subsequent pyruvylation. Has a role in meiosis. This is Beta-1,3-galactosyltransferase pvg3 (pvg3) from Schizosaccharomyces pombe (strain 972 / ATCC 24843) (Fission yeast).